A 572-amino-acid chain; its full sequence is Na(+)/citrate cotransporter (572 aa).

A run of 8 helical transmembrane segments spans residues 13–33 (SFAI…LIPD), 53–73 (VIPV…LKVL), 80–100 (IQYM…AVAV), 124–144 (LMLG…NTAA), 218–238 (SASI…VLLG), 255–275 (SWFG…WLWL), 315–335 (SLSY…ILWF), and 357–377 (HITD…IPSQ). The N-linked (GlcNAc...) asparagine glycan is linked to Asn-382. The next 4 helical transmembrane spans lie at 410 to 430 (VPWD…GCET), 443 to 463 (PLRL…VAMT), 491 to 511 (PLYV…LPVA), and 532 to 552 (TGLI…NTWG). N-linked (GlcNAc...) asparagine glycosylation is present at Asn-566.

Belongs to the SLC13A/DASS transporter (TC 2.A.47) family. NADC subfamily. In terms of assembly, homodimer.

The protein localises to the cell membrane. The enzyme catalyses citrate(out) + 4 Na(+)(out) = citrate(in) + 4 Na(+)(in). With respect to regulation, inhibited by Li(+). Its function is as follows. High-affinity sodium/citrate cotransporter that mediates citrate entry into cells, which is a critical participant of biochemical pathways. May function in various metabolic processes in which citrate has a critical role such as energy production (Krebs cycle), fatty acid synthesis, cholesterol synthesis, glycolysis, and gluconeogenesis. Transports citrate into the cell in a Na(+)-dependent manner, recognizing the trivalent form of citrate (physiological pH) rather than the divalent form. Can recognizes succinate as a substrate, but its affinity for succinate is several fold lower than for citrate. The stoichiometry is probably 4 Na(+) for each carboxylate, irrespective of whether the translocated substrate is divalent or trivalent, rendering the process electrogenic. Involved in the regulation of citrate levels in the brain. This chain is Na(+)/citrate cotransporter (Slc13a5), found in Mus musculus (Mouse).